The sequence spans 538 residues: Atos homolog protein B (538 aa).

4 disordered regions span residues 1–103 (MRHV…GLVS), 130–149 (GSATSSWTSGTQSTPWPSSN), 163–185 (PDQGGQGCLGESPGPAPSGQLHT), and 199–272 (KSPV…LGCP). A compositionally biased stretch (low complexity) spans 130–148 (GSATSSWTSGTQSTPWPSS). The segment covering 227–238 (HTPPGPGPPGPC) has biased composition (pro residues). A phosphoserine mark is found at Ser254 and Ser255. Residues 348 to 430 (LLGNFEESLL…VPKVGTIQVT (83 aa)) are required for macropage invasion. The segment at 436–444 (QTVVKMFLV) is transactivation domain 1 (TAD1).

The protein belongs to the ATOS family.

The protein resides in the nucleus. In terms of biological role, transcription regulator that may syncronize transcriptional and translational programs. This Rattus norvegicus (Rat) protein is Atos homolog protein B.